Here is a 240-residue protein sequence, read N- to C-terminus: 2,3-bisphosphoglycerate-dependent phosphoglycerate mutase 2 (240 aa).

Substrate-binding positions include 8-15, 21-22, R60, 87-90, K98, 114-115, and 183-184; these read RHGQSEWN, TG, ERHY, RR, and GN. H9 functions as the Tele-phosphohistidine intermediate in the catalytic mechanism. Catalysis depends on E87, which acts as the Proton donor/acceptor.

This sequence belongs to the phosphoglycerate mutase family. BPG-dependent PGAM subfamily.

The catalysed reaction is (2R)-2-phosphoglycerate = (2R)-3-phosphoglycerate. It functions in the pathway carbohydrate degradation; glycolysis; pyruvate from D-glyceraldehyde 3-phosphate: step 3/5. In terms of biological role, catalyzes the interconversion of 2-phosphoglycerate and 3-phosphoglycerate. This Bacillus cereus (strain ATCC 10987 / NRS 248) protein is 2,3-bisphosphoglycerate-dependent phosphoglycerate mutase 2.